The chain runs to 407 residues: Histidine--tRNA ligase (407 aa).

Belongs to the class-II aminoacyl-tRNA synthetase family. In terms of assembly, homodimer.

The protein localises to the cytoplasm. The catalysed reaction is tRNA(His) + L-histidine + ATP = L-histidyl-tRNA(His) + AMP + diphosphate + H(+). This chain is Histidine--tRNA ligase, found in Wolbachia pipientis subsp. Culex pipiens (strain wPip).